We begin with the raw amino-acid sequence, 663 residues long: Polyunsaturated fatty acid lipoxygenase ALOX12 (663 aa).

The region spanning 2-114 is the PLAT domain; the sequence is GRYRVRVVTG…ILSLPEGTAR (113 aa). The 549-residue stretch at 115–663 folds into the Lipoxygenase domain; the sequence is LAGDNALDVF…PSRIENSITI (549 aa). Position 246 is a phosphoserine (S246). H360, H365, H540, N544, and I663 together coordinate Fe cation.

Belongs to the lipoxygenase family. The cofactor is Fe cation. Found primarily in platelets and in microsomal and cytosolic fractions of the epidermis (at protein level).

The protein localises to the cytoplasm. The protein resides in the cytosol. It localises to the membrane. The enzyme catalyses (5Z,8Z,11Z,14Z)-eicosatetraenoate + O2 = (12S)-hydroperoxy-(5Z,8Z,10E,14Z)-eicosatetraenoate. It catalyses the reaction (9Z,12Z)-octadecadienoate + O2 = (13S)-hydroperoxy-(9Z,11E)-octadecadienoate. It carries out the reaction 2 leukotriene A4 + O2 + 2 H2O = 2 lipoxin A4. The catalysed reaction is 2 leukotriene A4 + O2 + 2 H2O = 2 lipoxin B4. The enzyme catalyses (5Z,8Z,11Z)-eicosatrienoate + O2 = (12S)-hydroperoxy-(5Z,8Z,10E)-eicosatrienoate. It catalyses the reaction (8Z,11Z,14Z)-eicosatrienoate + O2 = (12S)-hydroperoxy-(8Z,10E,14Z)-eicosatrienoate. It carries out the reaction (4Z,7Z,10Z,13Z,16Z,19Z)-docosahexaenoate + O2 = (14S)-hydroperoxy-(4Z,7Z,10Z,12E,16Z,19Z)-docosahexaenoate. The catalysed reaction is (7S)-hydroperoxy-(4Z,8E,10Z,13Z,16Z,19Z)-docosahexaenoate + O2 = (7S,14S)-dihydroperoxy-(4Z,8E,10Z,12E,16Z,19Z)-docosahexaenoate. The enzyme catalyses (7S)-hydroperoxy-(4Z,8E,10Z,13Z,16Z,19Z)-docosahexaenoate + O2 = (7S,17S)-dihydroperoxy-(4Z,8E,10Z,13Z,15E,19Z)-docosahexaenoate. It catalyses the reaction (14R,15S)-epoxy-(5Z,8Z,11Z)-eicosatrienoate + O2 = (12S)-hydroperoxy-(14R,15S)-epoxy-(5Z,8Z,10E)-eicosatrienoate. It carries out the reaction (14S,15R)-epoxy-(5Z,8Z,11Z)-eicosatrienoate + O2 = (12S)-hydroperoxy-(14S,15R)-epoxy-(5Z,8Z,10E)-eicosatrienoate. The catalysed reaction is (5Z,8Z,11Z,14Z)-eicosatetraenoate + O2 = (15S)-hydroperoxy-(5Z,8Z,11Z,13E)-eicosatetraenoate. The enzyme catalyses (14S)-hydroperoxy-(4Z,7Z,10Z,12E,16Z,19Z)-docosahexaenoate = (13S,14S)-epoxy-(4Z,7Z,9E,11E,16Z,19Z)-docosahexaenoate + H2O. It catalyses the reaction N-(5Z,8Z,11Z,14Z)-eicosatetraenoyl-L-alanine + O2 = N-(15S)-hydroperoxy-(5Z,8Z,11Z,13E)-eicosatetraenoyl-alanine. It carries out the reaction N-(5Z,8Z,11Z,14Z)-eicosatetraenoyl-L-alanine + O2 = N-(12S)-hydroperoxy-(5Z,8Z,10E,14Z)-eicosatetraenoyl-alanine. The catalysed reaction is N-(5Z,8Z,11Z,14Z)-eicosatetraenoyl-gamma-aminobutanoate + O2 = N-(15S)-hydroperoxy-(5Z,8Z,11Z,13E)-eicosatetraenoyl-gamma-aminobutanoate. The enzyme catalyses N-(5Z,8Z,11Z,14Z)-eicosatetraenoyl-gamma-aminobutanoate + O2 = N-(12S)-hydroperoxy-(5Z,8Z,10E,14Z)-eicosatetraenoyl-gamma-aminobutanoate. It catalyses the reaction N-(5Z,8Z,11Z,14Z)-eicosatetraenoyl-glycine + O2 = N-(15S)-hydroperoxy-(5Z,8Z,11Z,13E)-eicosatetraenoyl-glycine. It carries out the reaction N-(5Z,8Z,11Z,14Z)-eicosatetraenoyl-glycine + O2 = N-(12S)-hydroperoxy-(5Z,8Z,10E,14Z)-eicosatetraenoyl-glycine. The catalysed reaction is N-(5Z,8Z,11Z,14Z)-eicosatetraenoyl-taurine + O2 = N-(12S)-hydroperoxy-(5Z,8Z,10E,14Z)-eicosatetraenoyl-taurine. The enzyme catalyses N-(5Z,8Z,11Z,14Z)-eicosatetraenoyl-taurine + O2 = N-(15S)-hydroperoxy-(5Z,8Z,11Z,13E)-eicosatetraenoyl-taurine. It catalyses the reaction (5Z,8Z,11Z,14Z,17Z)-eicosapentaenoate + O2 = (12S)-hydroperoxy-(5Z,8Z,10E,14Z,17Z)-eicosapentaenoate. The protein operates within lipid metabolism; hydroperoxy eicosatetraenoic acid biosynthesis. With respect to regulation, activated by EGF. Arachidonic acid conversion is inhibited by (13S,14S)-epoxy-(4Z,7Z,9E,11E,16Z,19Z)-docosahexaenoate (13S,14S-epoxy-DHA). Arachidonate 12-lipoxygenase activity is decreased when PH decreases from 7.4 to 6. Its function is as follows. Catalyzes the regio and stereo-specific incorporation of molecular oxygen into free and esterified polyunsaturated fatty acids generating lipid hydroperoxides that can be further reduced to the corresponding hydroxy species. Mainly converts arachidonate ((5Z,8Z,11Z,14Z)-eicosatetraenoate) to the specific bioactive lipid (12S)-hydroperoxyeicosatetraenoate/(12S)-HPETE. Through the production of bioactive lipids like (12S)-HPETE it regulates different biological processes including platelet activation. It can also catalyze the epoxidation of double bonds of polyunsaturated fatty acids such as (14S)-hydroperoxy-docosahexaenoate/(14S)-HPDHA resulting in the formation of (13S,14S)-epoxy-DHA. Furthermore, it may participate in the sequential oxidations of DHA ((4Z,7Z,10Z,13Z,16Z,19Z)-docosahexaenoate) to generate specialized pro-resolving mediators (SPMs) like resolvin D5 ((7S,17S)-diHPDHA) and (7S,14S)-diHPDHA, that actively down-regulate the immune response and have anti-aggregation properties with platelets. An additional function involves a multistep process by which it transforms leukotriene A4/LTA4 into the bioactive lipids lipoxin A4/LXA4 and lipoxin B4/LXB4, both are vasoactive and LXA4 may regulate neutrophil function via occupancy of specific recognition sites. Can also peroxidize linoleate ((9Z,12Z)-octadecadienoate) to (13S)-hydroperoxyoctadecadienoate/ (13S-HPODE). Due to its role in regulating both the expression of the vascular endothelial growth factor (VEGF, an angiogenic factor involved in the survival and metastasis of solid tumors) and the expression of integrin beta-1 (known to affect tumor cell migration and proliferation), it can be regarded as protumorigenic. Important for cell survival, as it may play a role not only in proliferation but also in the prevention of apoptosis in vascular smooth muscle cells. This is Polyunsaturated fatty acid lipoxygenase ALOX12 (Alox12) from Mus musculus (Mouse).